A 392-amino-acid chain; its full sequence is BURP domain protein RD22 (392 aa).

The signal sequence occupies residues 1–22 (MAIRLPLICLLGSFMVVAIAAD). 4 TXV repeats span residues 56-58 (TNV), 78-80 (TAV), 100-102 (THV), and 125-127 (TDV). The tract at residues 57–164 (NVQVGKGGVN…PFVYNYAAKE (108 aa)) is 5 X approximate repeats. The interval 61 to 136 (GKGGVNVNTH…VGVGKGGVTV (76 aa)) is disordered. Positions 94-114 (GKPGGGTHVSVGSGKGHGGGV) are enriched in gly residues. Residues 176–392 (FFLEKDLVRG…PETHVVWFSY (217 aa)) enclose the BURP domain.

Expressed in seed. Highest expression in leaves and guard cells.

Its function is as follows. Acts to suppress chlorophyll degradation under moisture stress. The sequence is that of BURP domain protein RD22 from Arabidopsis thaliana (Mouse-ear cress).